Consider the following 210-residue polypeptide: Proteasome subunit beta (210 aa).

Residues 1 to 9 constitute a propeptide, removed in mature form; by autocatalysis; sequence MDNDKYLKG. The active-site Nucleophile is the Thr10.

Belongs to the peptidase T1B family. In terms of assembly, the 20S proteasome core is composed of 14 alpha and 14 beta subunits that assemble into four stacked heptameric rings, resulting in a barrel-shaped structure. The two inner rings, each composed of seven catalytic beta subunits, are sandwiched by two outer rings, each composed of seven alpha subunits. The catalytic chamber with the active sites is on the inside of the barrel. Has a gated structure, the ends of the cylinder being occluded by the N-termini of the alpha-subunits. Is capped at one or both ends by the proteasome regulatory ATPase, PAN.

The protein localises to the cytoplasm. The catalysed reaction is Cleavage of peptide bonds with very broad specificity.. Its activity is regulated as follows. The formation of the proteasomal ATPase PAN-20S proteasome complex, via the docking of the C-termini of PAN into the intersubunit pockets in the alpha-rings, triggers opening of the gate for substrate entry. Interconversion between the open-gate and close-gate conformations leads to a dynamic regulation of the 20S proteasome proteolysis activity. In terms of biological role, component of the proteasome core, a large protease complex with broad specificity involved in protein degradation. This Methanosarcina thermophila protein is Proteasome subunit beta.